We begin with the raw amino-acid sequence, 241 residues long: Sec-independent protein translocase protein TatC (241 aa).

The next 6 membrane-spanning stretches (helical) occupy residues L27 to G47, L76 to F96, F122 to I142, I161 to L181, L193 to P213, and L217 to L237.

This sequence belongs to the TatC family. Forms a complex with TatA.

The protein localises to the cell membrane. Part of the twin-arginine translocation (Tat) system that transports large folded proteins containing a characteristic twin-arginine motif in their signal peptide across membranes. The chain is Sec-independent protein translocase protein TatC from Methanocella arvoryzae (strain DSM 22066 / NBRC 105507 / MRE50).